Here is a 155-residue protein sequence, read N- to C-terminus: Large ribosomal subunit protein uL16m (155 aa).

Belongs to the universal ribosomal protein uL16 family.

Its subcellular location is the mitochondrion. The polypeptide is Large ribosomal subunit protein uL16m (RPL16) (Petunia hybrida (Petunia)).